A 416-amino-acid chain; its full sequence is D-amino acid dehydrogenase (416 aa).

Residue 3 to 17 participates in FAD binding; it reads ITILGSGVIGVTTAY.

The protein belongs to the DadA oxidoreductase family. It depends on FAD as a cofactor.

The enzyme catalyses a D-alpha-amino acid + A + H2O = a 2-oxocarboxylate + AH2 + NH4(+). It participates in amino-acid degradation; D-alanine degradation; NH(3) and pyruvate from D-alanine: step 1/1. In terms of biological role, oxidative deamination of D-amino acids. The protein is D-amino acid dehydrogenase of Brucella anthropi (strain ATCC 49188 / DSM 6882 / CCUG 24695 / JCM 21032 / LMG 3331 / NBRC 15819 / NCTC 12168 / Alc 37) (Ochrobactrum anthropi).